A 447-amino-acid polypeptide reads, in one-letter code: Na(+)-translocating NADH-quinone reductase subunit A (447 aa).

This sequence belongs to the NqrA family. As to quaternary structure, composed of six subunits; NqrA, NqrB, NqrC, NqrD, NqrE and NqrF.

The enzyme catalyses a ubiquinone + n Na(+)(in) + NADH + H(+) = a ubiquinol + n Na(+)(out) + NAD(+). NQR complex catalyzes the reduction of ubiquinone-1 to ubiquinol by two successive reactions, coupled with the transport of Na(+) ions from the cytoplasm to the periplasm. NqrA to NqrE are probably involved in the second step, the conversion of ubisemiquinone to ubiquinol. This Neisseria gonorrhoeae (strain ATCC 700825 / FA 1090) protein is Na(+)-translocating NADH-quinone reductase subunit A.